We begin with the raw amino-acid sequence, 131 residues long: Small ribosomal subunit protein bS6 (131 aa).

Residues 98–131 (EASPMARARDERDSRRGPAGERSYDEAHAEEIGE) form a disordered region. Positions 104 to 131 (RARDERDSRRGPAGERSYDEAHAEEIGE) are enriched in basic and acidic residues.

Belongs to the bacterial ribosomal protein bS6 family.

Its function is as follows. Binds together with bS18 to 16S ribosomal RNA. This chain is Small ribosomal subunit protein bS6, found in Shewanella putrefaciens (strain CN-32 / ATCC BAA-453).